The chain runs to 292 residues: MKNLTGIFSALLVAFNEDGSINEQGLRQIIRHNIDKMKVDGLYVGGSTGENFMLSTAEKKEIFRIAKDEAKDQIALIAQVGSVNLQEAVELGKYATELGYDCLSAVTPFYYKFSFAEIKHYYDTIIAETGNNMIVYSIPFLTGVNIGVEQFGELYKNPKILGVKFTAGDFYLLERLKKAYPNHLIWAGFDEMMLPAVALGVDGAIGSTFNVNAPRARQIFELTKQGKLAEALAVQHVTNDLIEGILANGLYLTIKELLKLQGVEAGYCREPMTAKATDKQLEVAKALYAKFL.

Aceneuramate is bound by residues Ser-47 and Thr-48. Residue Tyr-136 is the Proton donor of the active site. The active-site Schiff-base intermediate with substrate is the Lys-164. The aceneuramate site is built by Thr-166, Gly-188, Asp-190, Glu-191, and Ser-207.

This sequence belongs to the DapA family. NanA subfamily. Homotetramer.

The protein localises to the cytoplasm. It carries out the reaction aceneuramate = aldehydo-N-acetyl-D-mannosamine + pyruvate. It participates in amino-sugar metabolism; N-acetylneuraminate degradation; D-fructose 6-phosphate from N-acetylneuraminate: step 1/5. Its function is as follows. Catalyzes the reversible aldol cleavage of N-acetylneuraminic acid (sialic acid; Neu5Ac) to form pyruvate and N-acetylmannosamine (ManNAc) via a Schiff base intermediate. In Actinobacillus pleuropneumoniae serotype 5b (strain L20), this protein is N-acetylneuraminate lyase.